Here is a 308-residue protein sequence, read N- to C-terminus: Porphobilinogen deaminase (308 aa).

Cys-241 is modified (S-(dipyrrolylmethanemethyl)cysteine).

This sequence belongs to the HMBS family. Monomer. Dipyrromethane is required as a cofactor.

It carries out the reaction 4 porphobilinogen + H2O = hydroxymethylbilane + 4 NH4(+). Its pathway is porphyrin-containing compound metabolism; protoporphyrin-IX biosynthesis; coproporphyrinogen-III from 5-aminolevulinate: step 2/4. Tetrapolymerization of the monopyrrole PBG into the hydroxymethylbilane pre-uroporphyrinogen in several discrete steps. The chain is Porphobilinogen deaminase from Staphylococcus aureus (strain Newman).